Consider the following 95-residue polypeptide: Aspartyl/glutamyl-tRNA(Asn/Gln) amidotransferase subunit C (95 aa).

It belongs to the GatC family. As to quaternary structure, heterotrimer of A, B and C subunits.

The enzyme catalyses L-glutamyl-tRNA(Gln) + L-glutamine + ATP + H2O = L-glutaminyl-tRNA(Gln) + L-glutamate + ADP + phosphate + H(+). It carries out the reaction L-aspartyl-tRNA(Asn) + L-glutamine + ATP + H2O = L-asparaginyl-tRNA(Asn) + L-glutamate + ADP + phosphate + 2 H(+). Its function is as follows. Allows the formation of correctly charged Asn-tRNA(Asn) or Gln-tRNA(Gln) through the transamidation of misacylated Asp-tRNA(Asn) or Glu-tRNA(Gln) in organisms which lack either or both of asparaginyl-tRNA or glutaminyl-tRNA synthetases. The reaction takes place in the presence of glutamine and ATP through an activated phospho-Asp-tRNA(Asn) or phospho-Glu-tRNA(Gln). In Rhodopseudomonas palustris (strain ATCC BAA-98 / CGA009), this protein is Aspartyl/glutamyl-tRNA(Asn/Gln) amidotransferase subunit C.